The primary structure comprises 243 residues: Small ribosomal subunit protein uS3 (243 aa).

The KH type-2 domain maps to 39 to 107 (MRKFVMSELK…ETHLNIVEVR (69 aa)). Residues 214-243 (ASERRAMEGDAQGPASRDRDRDRDRRRDNA) are disordered. Residues 229-243 (SRDRDRDRDRRRDNA) are compositionally biased toward basic and acidic residues.

This sequence belongs to the universal ribosomal protein uS3 family. As to quaternary structure, part of the 30S ribosomal subunit. Forms a tight complex with proteins S10 and S14.

Its function is as follows. Binds the lower part of the 30S subunit head. Binds mRNA in the 70S ribosome, positioning it for translation. The protein is Small ribosomal subunit protein uS3 of Rhizobium johnstonii (strain DSM 114642 / LMG 32736 / 3841) (Rhizobium leguminosarum bv. viciae).